The following is a 517-amino-acid chain: tRNA-2-methylthio-N(6)-dimethylallyladenosine synthase (517 aa).

The MTTase N-terminal domain maps to 18–137 (RTYQVRTYGC…LPTLLDRARH (120 aa)). [4Fe-4S] cluster contacts are provided by C27, C66, C100, C174, C178, and C181. The Radical SAM core domain maps to 160-397 (RESDYAAWVS…ELQEQICMEE (238 aa)). Residues 399–470 (RVLIGRIVEL…PHHLIADAGI (72 aa)) enclose the TRAM domain.

The protein belongs to the methylthiotransferase family. MiaB subfamily. In terms of assembly, monomer. The cofactor is [4Fe-4S] cluster.

Its subcellular location is the cytoplasm. It carries out the reaction N(6)-dimethylallyladenosine(37) in tRNA + (sulfur carrier)-SH + AH2 + 2 S-adenosyl-L-methionine = 2-methylsulfanyl-N(6)-dimethylallyladenosine(37) in tRNA + (sulfur carrier)-H + 5'-deoxyadenosine + L-methionine + A + S-adenosyl-L-homocysteine + 2 H(+). Functionally, catalyzes the methylthiolation of N6-(dimethylallyl)adenosine (i(6)A), leading to the formation of 2-methylthio-N6-(dimethylallyl)adenosine (ms(2)i(6)A) at position 37 in tRNAs that read codons beginning with uridine. The chain is tRNA-2-methylthio-N(6)-dimethylallyladenosine synthase from Mycobacterium leprae (strain TN).